A 161-amino-acid chain; its full sequence is Nucleotide-binding protein Mmwyl1_2033 (161 aa).

This sequence belongs to the YajQ family.

Its function is as follows. Nucleotide-binding protein. In Marinomonas sp. (strain MWYL1), this protein is Nucleotide-binding protein Mmwyl1_2033.